Consider the following 205-residue polypeptide: Holliday junction branch migration complex subunit RuvA (205 aa).

Residues 1–62 (MFEYVTGYVE…EDIMALYGFK (62 aa)) form a domain I region. Residues 63 to 141 (TREERLLFTK…DVVPDAFVDL (79 aa)) form a domain II region. A flexible linker region spans residues 142-152 (FSDTERFDEKK). The domain III stretch occupies residues 153-205 (GSSAELDEALEALRALGYAEREVSRVVPELLKESLTTDQYIKKALSLLLNGKR).

The protein belongs to the RuvA family. Homotetramer. Forms an RuvA(8)-RuvB(12)-Holliday junction (HJ) complex. HJ DNA is sandwiched between 2 RuvA tetramers; dsDNA enters through RuvA and exits via RuvB. An RuvB hexamer assembles on each DNA strand where it exits the tetramer. Each RuvB hexamer is contacted by two RuvA subunits (via domain III) on 2 adjacent RuvB subunits; this complex drives branch migration. In the full resolvosome a probable DNA-RuvA(4)-RuvB(12)-RuvC(2) complex forms which resolves the HJ.

It is found in the cytoplasm. The RuvA-RuvB-RuvC complex processes Holliday junction (HJ) DNA during genetic recombination and DNA repair, while the RuvA-RuvB complex plays an important role in the rescue of blocked DNA replication forks via replication fork reversal (RFR). RuvA specifically binds to HJ cruciform DNA, conferring on it an open structure. The RuvB hexamer acts as an ATP-dependent pump, pulling dsDNA into and through the RuvAB complex. HJ branch migration allows RuvC to scan DNA until it finds its consensus sequence, where it cleaves and resolves the cruciform DNA. The polypeptide is Holliday junction branch migration complex subunit RuvA (Bacillus cereus (strain ATCC 14579 / DSM 31 / CCUG 7414 / JCM 2152 / NBRC 15305 / NCIMB 9373 / NCTC 2599 / NRRL B-3711)).